A 132-amino-acid polypeptide reads, in one-letter code: uncharacterized protein (132 aa).

The next 3 helical transmembrane spans lie at 19 to 39 (FTWIFGAWDIPLITLLVFIFL), 58 to 78 (IGLRGITKKGLILVVLLVAVM), and 93 to 113 (LIAYFYIMNEGISILENCAAL).

This sequence belongs to the bacteriophage holin family. Cp-1 holin subfamily.

The protein localises to the cell membrane. This is an uncharacterized protein from Clostridium perfringens.